The primary structure comprises 122 residues: MIQMQTNLDVADNSGARRVMCIKVLGGSKRKYASIGDIIVVSIKEAIPRGRVKKGDVMKAVVVRTAKDIRRADGSVIRFDTNAAVLIDNKKEPIGTRIFGPVPRELRAKNHMKIISLAPEVL.

This sequence belongs to the universal ribosomal protein uL14 family. Part of the 50S ribosomal subunit. Forms a cluster with proteins L3 and L19. In the 70S ribosome, L14 and L19 interact and together make contacts with the 16S rRNA in bridges B5 and B8.

Binds to 23S rRNA. Forms part of two intersubunit bridges in the 70S ribosome. The chain is Large ribosomal subunit protein uL14 from Rhizobium meliloti (strain 1021) (Ensifer meliloti).